The primary structure comprises 35 residues: Antimicrobial peptide 3 (35 aa).

The Chitin-binding type-1 domain maps to 4-35 (GGECGGRFGGCAGGQCCSRFGFCGSGPKYCAH). 3 cysteine pairs are disulfide-bonded: Cys-7–Cys-20, Cys-14–Cys-26, and Cys-19–Cys-33.

Contains 3 disulfide bonds. As to expression, expressed in leaf, flower, stem and seed with highest expression in leaf (at protein level).

Its function is as follows. Has antifungal activity against A.niger (IC(50)=5.4 uM), B.sorokiniana (IC(50)=2.0 uM), B.cinerea (IC(50)=1.6 uM), F.solani (IC(50)=3.7 uM) and A.alternata (IC(50)=5.0 uM). Binds chitin in vitro. Has no antibacterial activity at concentrations up to 10 uM. This chain is Antimicrobial peptide 3, found in Stellaria media (Common chickweed).